The primary structure comprises 85 residues: Alpha-defensin 11 (85 aa).

An N-terminal signal peptide occupies residues 1 to 11 (ALVLLAFQVQA). Positions 12-50 (DPIQNTDEETKTEEQPGEEDQAVSVSFGDPEGTSLQEES) are excised as a propeptide. The tract at residues 14 to 46 (IQNTDEETKTEEQPGEEDQAVSVSFGDPEGTSL) is disordered. Disulfide bonds link Cys56-Cys84, Cys58-Cys73, and Cys63-Cys83.

Belongs to the alpha-defensin family. In terms of tissue distribution, paneth cells of the small bowel.

The protein localises to the secreted. Its function is as follows. Probably contributes to the antimicrobial barrier function of the small bowel mucosa. The polypeptide is Alpha-defensin 11 (Defa11) (Mus musculus (Mouse)).